The primary structure comprises 614 residues: Chaperone protein HtpG (614 aa).

The interval 1–324 is a; substrate-binding; it reads MSQIETKEFQ…SEELPLNISR (324 aa). Residues 325–537 form a b region; that stretch reads ETMQDSALIA…SHYGTHSMQR (213 aa). Residues 538-614 form a c region; that stretch reads MMQLMNRDLQ…LNEILEKALR (77 aa).

This sequence belongs to the heat shock protein 90 family. In terms of assembly, homodimer.

It localises to the cytoplasm. Its function is as follows. Molecular chaperone. Has ATPase activity. This Desulfitobacterium hafniense (strain Y51) protein is Chaperone protein HtpG.